A 593-amino-acid chain; its full sequence is DNA topoisomerase I, mitochondrial (593 aa).

A mitochondrion-targeting transit peptide spans 1-43 (MLLLWLRALCRRFQHVPRRVPSRQVSRGSKASRAGWGETSKSS). Interaction with DNA stretches follow at residues 254–255 (KY), 317–322 (RTGNEK), and 414–416 (TAK). Residues 261 to 593 (SSKPKGEMDW…FNQAGEDFEF (333 aa)) form the Topo IB-type catalytic domain. Tyr551 serves as the catalytic O-(3'-phospho-DNA)-tyrosine intermediate.

This sequence belongs to the type IB topoisomerase family. Ca(2+) serves as cofactor. The cofactor is Mg(2+).

Its subcellular location is the mitochondrion. It carries out the reaction ATP-independent breakage of single-stranded DNA, followed by passage and rejoining.. Functionally, releases the supercoiling and torsional tension of DNA introduced during duplication of mitochondrial DNA by transiently cleaving and rejoining one strand of the DNA duplex. Introduces a single-strand break via transesterification at a target site in duplex DNA. The scissile phosphodiester is attacked by the catalytic tyrosine of the enzyme, resulting in the formation of a DNA-(3'-phosphotyrosyl)-enzyme intermediate and the expulsion of a 5'-OH DNA strand. The free DNA strand then rotates around the intact phosphodiester bond on the opposing strand, thus removing DNA supercoils. Finally, in the religation step, the DNA 5'-OH attacks the covalent intermediate to expel the active-site tyrosine and restore the DNA phosphodiester backbone. The sequence is that of DNA topoisomerase I, mitochondrial (Top1mt) from Rattus norvegicus (Rat).